The primary structure comprises 35 residues: U2-agatoxin-Aop1a (35 aa).

Disulfide bonds link Cys-3-Cys-19, Cys-10-Cys-24, and Cys-18-Cys-34. Leu-35 is modified (leucine amide).

It belongs to the neurotoxin 01 (U2-agtx) family. As to expression, expressed by the venom gland.

Its subcellular location is the secreted. In terms of biological role, insect-selective toxin causing rapid but reversible paralysis in crickets. Suppresses the excitatory postsynaptic potentials evoked in lobster neuromuscular synaptic preparations, possibly by blocking the presynaptic calcium channel (Cav). Induces instantaneous reversible paralysis when injected into crickets. This is U2-agatoxin-Aop1a from Allagelena opulenta (Funnel weaving spider).